The sequence spans 408 residues: Imidazolonepropionase (408 aa).

Residues His73 and His75 each coordinate Fe(3+). Zn(2+) contacts are provided by His73 and His75. 3 residues coordinate 4-imidazolone-5-propanoate: Arg82, Tyr145, and His178. An N-formimidoyl-L-glutamate-binding site is contributed by Tyr145. Fe(3+) is bound at residue His243. His243 is a binding site for Zn(2+). Gln246 provides a ligand contact to 4-imidazolone-5-propanoate. Position 318 (Asp318) interacts with Fe(3+). Zn(2+) is bound at residue Asp318. Residues Asn320 and Gly322 each coordinate N-formimidoyl-L-glutamate. Ser323 contributes to the 4-imidazolone-5-propanoate binding site.

It belongs to the metallo-dependent hydrolases superfamily. HutI family. Requires Zn(2+) as cofactor. Fe(3+) serves as cofactor.

It is found in the cytoplasm. It carries out the reaction 4-imidazolone-5-propanoate + H2O = N-formimidoyl-L-glutamate. It participates in amino-acid degradation; L-histidine degradation into L-glutamate; N-formimidoyl-L-glutamate from L-histidine: step 3/3. In terms of biological role, catalyzes the hydrolytic cleavage of the carbon-nitrogen bond in imidazolone-5-propanoate to yield N-formimidoyl-L-glutamate. It is the third step in the universal histidine degradation pathway. In Shewanella oneidensis (strain ATCC 700550 / JCM 31522 / CIP 106686 / LMG 19005 / NCIMB 14063 / MR-1), this protein is Imidazolonepropionase.